A 212-amino-acid polypeptide reads, in one-letter code: Cytochrome c biogenesis ATP-binding export protein CcmA (212 aa).

The ABC transporter domain occupies 8–212 (LQATALACER…RSIDLAKGSA (205 aa)). An ATP-binding site is contributed by 40 to 47 (GPNGSGKT).

Belongs to the ABC transporter superfamily. CcmA exporter (TC 3.A.1.107) family. The complex is composed of two ATP-binding proteins (CcmA) and two transmembrane proteins (CcmB).

The protein localises to the cell inner membrane. It carries out the reaction heme b(in) + ATP + H2O = heme b(out) + ADP + phosphate + H(+). Part of the ABC transporter complex CcmAB involved in the biogenesis of c-type cytochromes; once thought to export heme, this seems not to be the case, but its exact role is uncertain. Responsible for energy coupling to the transport system. The chain is Cytochrome c biogenesis ATP-binding export protein CcmA from Pseudomonas syringae pv. tomato (strain ATCC BAA-871 / DC3000).